The following is a 145-amino-acid chain: D-aminoacyl-tRNA deacylase (145 aa).

The Gly-cisPro motif, important for rejection of L-amino acids signature appears at 137-138; the sequence is GP.

The protein belongs to the DTD family. As to quaternary structure, homodimer.

The protein resides in the cytoplasm. It carries out the reaction glycyl-tRNA(Ala) + H2O = tRNA(Ala) + glycine + H(+). The catalysed reaction is a D-aminoacyl-tRNA + H2O = a tRNA + a D-alpha-amino acid + H(+). In terms of biological role, an aminoacyl-tRNA editing enzyme that deacylates mischarged D-aminoacyl-tRNAs. Also deacylates mischarged glycyl-tRNA(Ala), protecting cells against glycine mischarging by AlaRS. Acts via tRNA-based rather than protein-based catalysis; rejects L-amino acids rather than detecting D-amino acids in the active site. By recycling D-aminoacyl-tRNA to D-amino acids and free tRNA molecules, this enzyme counteracts the toxicity associated with the formation of D-aminoacyl-tRNA entities in vivo and helps enforce protein L-homochirality. The sequence is that of D-aminoacyl-tRNA deacylase from Pseudomonas putida (strain GB-1).